The primary structure comprises 169 residues: Ribosome maturation factor RimP (169 aa).

Belongs to the RimP family.

The protein resides in the cytoplasm. In terms of biological role, required for maturation of 30S ribosomal subunits. This chain is Ribosome maturation factor RimP, found in Koribacter versatilis (strain Ellin345).